Reading from the N-terminus, the 166-residue chain is MSEPQPRGAERDLYRDTWVRYLGYANEVGEAFRSLVPAAVVWLSYGVASSYVLADAIDKGKKAGEVPSPEAGRSARVTVAVVDTFVWQALASVAIPGFTINRVCAASLYVLGTATRWPLAVRKWTTTALGLLTIPIIIHPIDRSVDFLLDSSLRKLYPTVGKPSSS.

The next 2 membrane-spanning stretches (helical) occupy residues 34-54 and 80-100; these read SLVPAAVVWLSYGVASSYVLA and AVVDTFVWQALASVAIPGFTI. K123 carries the post-translational modification N6-succinyllysine. The helical transmembrane segment at 129–149 threads the bilayer; it reads LGLLTIPIIIHPIDRSVDFLL.

The protein belongs to the MTFP1 family.

It localises to the mitochondrion inner membrane. Involved in the mitochondrial division probably by regulating membrane fission. Loss-of-function induces the release of cytochrome c, which activates the caspase cascade and leads to apoptosis. The protein is Mitochondrial fission process protein 1 (MTFP1) of Homo sapiens (Human).